The primary structure comprises 272 residues: Phosphoglycolate phosphatase 1 (272 aa).

Aspartate 19 acts as the Nucleophile in catalysis. Mg(2+)-binding residues include aspartate 19, aspartate 21, and aspartate 182.

This sequence belongs to the HAD-like hydrolase superfamily. CbbY/CbbZ/Gph/YieH family. Requires Mg(2+) as cofactor.

The catalysed reaction is 2-phosphoglycolate + H2O = glycolate + phosphate. The protein operates within organic acid metabolism; glycolate biosynthesis; glycolate from 2-phosphoglycolate: step 1/1. Functionally, specifically catalyzes the dephosphorylation of 2-phosphoglycolate. Is involved in the dissimilation of the intracellular 2-phosphoglycolate formed during the DNA repair of 3'-phosphoglycolate ends, a major class of DNA lesions induced by oxidative stress. This is Phosphoglycolate phosphatase 1 from Pseudomonas aeruginosa (strain ATCC 15692 / DSM 22644 / CIP 104116 / JCM 14847 / LMG 12228 / 1C / PRS 101 / PAO1).